Reading from the N-terminus, the 199-residue chain is uncharacterized protein (199 aa).

Residues 21-38 form a helical membrane-spanning segment; the sequence is ISPSATNFIVSLVIMILI.

Its subcellular location is the membrane. This is an uncharacterized protein from Saccharomyces cerevisiae (strain ATCC 204508 / S288c) (Baker's yeast).